Consider the following 310-residue polypeptide: uncharacterized protein (310 aa).

Disordered regions lie at residues 22-163 and 178-209; these read LARQ…PVEH and EAEAETEVREAQPGRGERHAAAAAAGTDVEGD. 2 stretches are compositionally biased toward basic and acidic residues: residues 56–66 and 183–197; these read IIRDDHHHAGP and TEVREAQPGRGERHA. Positions 198–209 are enriched in low complexity; that stretch reads AAAAAGTDVEGD. The next 3 helical transmembrane spans lie at 231 to 251, 257 to 277, and 286 to 306; these read ALVVLQSILAVAFGAGLFIAF, WNSIVALVLSVMVILGLVVSV, and IASTLIAVAVGALITLGPLAL.

This sequence to M.leprae ML2433.

The protein resides in the cell membrane. This is an uncharacterized protein from Mycobacterium tuberculosis (strain CDC 1551 / Oshkosh).